Reading from the N-terminus, the 291-residue chain is Beta-lactamase CTX-M-25 (291 aa).

Residues 1-30 (MMRKSVRRAMLMTTACVSLLLASVPLCAQA) form the signal peptide. Serine 73 (nucleophile; acyl-ester intermediate) is an active-site residue. A beta-lactam contacts are provided by lysine 76, serine 133, glutamate 169, and serine 240.

Belongs to the class-A beta-lactamase family. As to quaternary structure, monomer.

It is found in the secreted. The catalysed reaction is a beta-lactam + H2O = a substituted beta-amino acid. Its activity is regulated as follows. Inhibited by the beta-lactamase-blocking agents clavulanic acid and tazobactam; in the DH10B strain. Its function is as follows. Extended-spectrum beta-lactamase (ESBL) which confers resistance to penicillins, as well as first, second and third-generation cephalosporins. Has cefotaxime-hydrolyzing activity. Inactive against cephalosporin antibiotic, cefoxitin, and the carbapenem, imipenem. This chain is Beta-lactamase CTX-M-25, found in Escherichia coli.